Reading from the N-terminus, the 644-residue chain is Cyclin-dependent kinase C-2 C (644 aa).

In terms of domain architecture, Protein kinase spans 105 to 389; the sequence is FQKLEKIGQG…ASSALNSEYF (285 aa). Residues 111–119 and Lys-134 contribute to the ATP site; that span reads IGQGTYSSV. Tyr-116 bears the Phosphotyrosine mark. Asp-229 (proton acceptor) is an active-site residue. Thr-263 bears the Phosphothreonine mark. The Nuclear localization signal signature appears at 420-427; sequence RKRANLKL. Basic and acidic residues predominate over residues 565 to 576; that stretch reads SKLSRIGERHGS. Positions 565–591 are disordered; the sequence is SKLSRIGERHGSLDGSGLDFSQREEDS.

This sequence belongs to the protein kinase superfamily. CMGC Ser/Thr protein kinase family. CDC2/CDKX subfamily. In terms of processing, autophosphorylated. As to expression, expressed specifically in flowers and pollen.

Its subcellular location is the nucleus. This chain is Cyclin-dependent kinase C-2 C, found in Arabidopsis thaliana (Mouse-ear cress).